The sequence spans 843 residues: Eisosome protein 1 (843 aa).

S2 is modified (N-acetylserine). Phosphoserine is present on S2. A disordered region spans residues 13–44 (HNIGKTSGGGSRTSSITSSKKSLKHGSKSLRK). Residues 33–44 (KSLKHGSKSLRK) show a composition bias toward basic residues. A phosphoserine mark is found at S88 and S130. Residues 120–174 (KMGPKVVRNNSITSATSKTSKESQTKRKSKESPGAAASKAYSMTMETTSLSSQTN) form a disordered region. Composition is skewed to polar residues over residues 127-137 (RNNSITSATSK) and 163-174 (TMETTSLSSQTN). Residues S182, S401, S584, and S710 each carry the phosphoserine modification. The interval 717-843 (DLPTQLEKIE…QDAISNQEKK (127 aa)) is disordered. T720 carries the phosphothreonine modification. The span at 752 to 764 (STAAKEATETSSA) shows a compositional bias: low complexity. 2 positions are modified to phosphoserine: S763 and S775. The span at 781–797 (SGKEDANDCKSAEHSKE) shows a compositional bias: basic and acidic residues. Over residues 798-810 (ISVSQKAGNNKSL) the composition is skewed to polar residues. S816, S828, S829, and S838 each carry phosphoserine.

The protein belongs to the EIS1 family.

The protein resides in the cytoplasmic granule. Its subcellular location is the cell membrane. In terms of biological role, required for normal formation of eisosomes, large cytoplasmic protein assemblies that localize to specialized domains on plasma membrane and mark the site of endocytosis. This Saccharomyces cerevisiae (strain RM11-1a) (Baker's yeast) protein is Eisosome protein 1 (EIS1).